We begin with the raw amino-acid sequence, 328 residues long: Probable voltage-gated potassium channel subunit beta (328 aa).

Trp-21, Gln-27, and Asp-49 together coordinate NADP(+). Catalysis depends on Tyr-54, which acts as the Proton donor/acceptor. Positions 152, 178, 207, 208, 209, 210, 211, 218, 229, 285, 287, 291, 294, and 295 each coordinate NADP(+).

The protein belongs to the shaker potassium channel beta subunit family. Forms heteromultimeric complexes with potassium channel alpha subunits. In terms of tissue distribution, expressed in roots, leaves and flowers (at protein level).

Its function is as follows. Probable accessory potassium channel protein which modulates the activity of the pore-forming alpha subunit. This Arabidopsis thaliana (Mouse-ear cress) protein is Probable voltage-gated potassium channel subunit beta (KAB1).